A 696-amino-acid chain; its full sequence is Neurogenic protein big brain (696 aa).

Residues 1-71 lie on the Cytoplasmic side of the membrane; it reads MADESLHTVP…LEFWRSIISE (71 aa). The residue at position 46 (Ser46) is a Phosphoserine. Thr47 is modified (phosphothreonine). A helical transmembrane segment spans residues 72 to 93; sequence CLASFMYVFIVCGAAAGVGVGA. Topologically, residues 94–97 are extracellular; it reads SVSS. Residues 98-118 traverse the membrane as a helical segment; sequence VLLATALASGLAMATLTQCFL. Residues 119–143 lie on the Cytoplasmic side of the membrane; the sequence is HISGAHINPAVTLALCVVRSISPIR. An NPA 1 motif is present at residues 126–128; sequence NPA. Residues 144 to 167 form a helical membrane-spanning segment; sequence AAMYITAQCGGGIAGAALLYGVTV. The Extracellular segment spans residues 168–189; sequence PGYQGNLQAAISHSAALAAWER. Residues 190 to 208 traverse the membrane as a helical segment; the sequence is FGVEFILTFLVVLCYFVST. The Cytoplasmic segment spans residues 209-213; the sequence is DPMKK. The chain crosses the membrane as a helical span at residues 214–234; the sequence is FMGNSAASIGCAYSACCFVSM. Residues 235 to 256 are Extracellular-facing; that stretch reads PYLNPARSLGPSFVLNKWDSHW. An NPA 2 motif is present at residues 238 to 240; that stretch reads NPA. Residues 257–273 traverse the membrane as a helical segment; the sequence is VYWFGPLVGGMASGLVY. A Phosphotyrosine; by Src modification is found at Tyr273. Over 274–696 the chain is Cytoplasmic; it reads EYIFNSRNRN…HYGMLPLRPN (423 aa). The residue at position 300 (Ser300) is a Phosphoserine. Residues 314–345 form a disordered region; the sequence is NKYQQSQGTYPRGQSNGNGGGQAAGNGQHQAA. Phosphotyrosine; by Abl is present on Tyr367. Residue Tyr384 is modified to Phosphotyrosine; by Src. A Phosphoserine modification is found at Ser394. Disordered regions lie at residues 436-634 and 650-696; these read MRTQ…KVSA and TSQG…LRPN. Low complexity-rich tracts occupy residues 439-451 and 462-472; these read QQQQ…QQQQ and QNQNVQNQMQQ. Tyr478 is modified (phosphotyrosine; by Src). The segment covering 487–532 has biased composition (low complexity); sequence QQQPIQQQQQQQQQQQLQQQQPNMGVQQQQMQPPPQMMSDPQQQPQ. Basic and acidic residues predominate over residues 549–558; it reads GNHKYDRRDP. Phosphoserine is present on Ser576. A compositionally biased stretch (low complexity) spans 576 to 587; that stretch reads SDDSSYGSYHGS. Residues 599-616 are compositionally biased toward pro residues; the sequence is EPSPPPPPMLMYAPPPQP. Position 610 is a phosphotyrosine; by Abl (Tyr610). Low complexity predominate over residues 659–686; that stretch reads QQQQQQQQQQQQQQQQQQQQMMMQQQQQ.

The protein belongs to the MIP/aquaporin (TC 1.A.8) family. In terms of processing, phosphorylated at its C-terminus. In terms of tissue distribution, detected in all tissues with neurogenic abilities, for example the neurogenic ectoderm.

Its subcellular location is the membrane. Functionally, essential for proper differentiation of ectoderm. Acts synergistically with neurogenic locus proteins Notch and Delta during the separation of neural and epidermal cell lineages in response to the lateral inhibition signal. Voltage-insensitive monovalent cation channel. Ion transport is blocked by the presence of divalent cations. The polypeptide is Neurogenic protein big brain (bib) (Drosophila melanogaster (Fruit fly)).